The following is a 200-amino-acid chain: Dephospho-CoA kinase (200 aa).

The DPCK domain maps to 4–200; that stretch reads TIGLTGSVAT…TFIERFVNNK (197 aa). An ATP-binding site is contributed by 12-17; the sequence is ATGKST.

Belongs to the CoaE family.

It localises to the cytoplasm. It catalyses the reaction 3'-dephospho-CoA + ATP = ADP + CoA + H(+). Its pathway is cofactor biosynthesis; coenzyme A biosynthesis; CoA from (R)-pantothenate: step 5/5. Functionally, catalyzes the phosphorylation of the 3'-hydroxyl group of dephosphocoenzyme A to form coenzyme A. This chain is Dephospho-CoA kinase, found in Listeria innocua serovar 6a (strain ATCC BAA-680 / CLIP 11262).